A 164-amino-acid polypeptide reads, in one-letter code: UPF0304 protein Asuc_0543 (164 aa).

This sequence belongs to the UPF0304 family.

This Actinobacillus succinogenes (strain ATCC 55618 / DSM 22257 / CCUG 43843 / 130Z) protein is UPF0304 protein Asuc_0543.